Reading from the N-terminus, the 215-residue chain is Agamous-like MADS-box protein AGL63 (215 aa).

The 61-residue stretch at 1–61 (MRKGKRVIKK…NRLYDFCSNS (61 aa)) folds into the MADS-box domain. The region spanning 90 to 178 (CSDCVKTKES…GSSWEQLMWQ (89 aa)) is the K-box domain. 2 disordered regions span residues 143 to 172 (ARKS…GSSW) and 184 to 215 (MTCQ…SSPP).

As to quaternary structure, forms homodimer. Interacts with AGL16. Expressed in bud pedicels, petals, anthers, style, ovary, seeds and embryos.

It localises to the nucleus. In terms of biological role, probable transcription factor involved in the regulation of fruit growth. Contributes to integument development. Controls organ size via cell expansion. Involved in the regulation of longitudinal growth of the fruit evenly throughout the radial axis. Functions redundantly with TT16/AGL32 to repress nucellus growth and promote its degeneration. In Arabidopsis thaliana (Mouse-ear cress), this protein is Agamous-like MADS-box protein AGL63.